Reading from the N-terminus, the 326-residue chain is Eukaryotic translation initiation factor 3 subunit I (326 aa).

5 WD repeats span residues 8–47, 50–89, 145–184, 188–227, and 285–326; these read GHERSITQIKYNREGDLLFSCSKDQKPNVWYSLNGERLGT, GHQGAVWCLDVDWESRKLITGAGDMTAKIWDVEYGTVIAS, MTESKITSMLWGPLDETIITGHDNGNIAIWDIRKGQKVVD, DHSAGINDMQLSKDGTMFVTASKDTTAKLFDSESLMCLKT, and GHFG…NIFE.

It belongs to the eIF-3 subunit I family. Component of the eukaryotic translation initiation factor 3 (eIF-3) complex. The eIF-3 complex interacts with pix.

It localises to the cytoplasm. In terms of biological role, component of the eukaryotic translation initiation factor 3 (eIF-3) complex, which is involved in protein synthesis of a specialized repertoire of mRNAs and, together with other initiation factors, stimulates binding of mRNA and methionyl-tRNAi to the 40S ribosome. The eIF-3 complex specifically targets and initiates translation of a subset of mRNAs involved in cell proliferation. The sequence is that of Eukaryotic translation initiation factor 3 subunit I from Drosophila sechellia (Fruit fly).